The chain runs to 892 residues: Iodate reductase subunit IdrA (892 aa).

[3Fe-4S] cluster-binding residues include Cys27, Cys30, and Cys34. The span at 431–442 shows a compositional bias: gly residues; it reads RGGGHQRGGLSA. A disordered region spans residues 431–452; sequence RGGGHQRGGLSAGGNSEWLSPE.

Belongs to the prokaryotic molybdopterin-containing oxidoreductase family. In terms of assembly, the iodate reductase (Idr) complex is composed of a molybdopterin-dependent iodate reductase (IdrA and IdrB subunits) and two associated peroxidases (IdrP1 and IdrP2). [3Fe-4S] cluster is required as a cofactor. It depends on Mo-bis(molybdopterin guanine dinucleotide) as a cofactor.

It localises to the periplasm. Functionally, involved in iodate respiration. Probably catalyzes the reduction of iodate (IO(3)(-)) to hypoiodous acid (HIO) and H(2)O(2), using a reduced cytochrome c as the electron donor. This chain is Iodate reductase subunit IdrA, found in Pseudomonas sp. (strain SCT).